Reading from the N-terminus, the 291-residue chain is Acetyl-coenzyme A carboxylase carboxyl transferase subunit beta (291 aa).

The 263-residue stretch at 29 to 291 (IMTKCPDCKK…TGGDLEWLEN (263 aa)) folds into the CoA carboxyltransferase N-terminal domain. Zn(2+) is bound by residues cysteine 33, cysteine 36, cysteine 52, and cysteine 55. A C4-type zinc finger spans residues 33–55 (CPDCKKIMLTKELDKNLRVCMNC).

This sequence belongs to the AccD/PCCB family. In terms of assembly, acetyl-CoA carboxylase is a heterohexamer composed of biotin carboxyl carrier protein (AccB), biotin carboxylase (AccC) and two subunits each of ACCase subunit alpha (AccA) and ACCase subunit beta (AccD). Zn(2+) serves as cofactor.

Its subcellular location is the cytoplasm. It catalyses the reaction N(6)-carboxybiotinyl-L-lysyl-[protein] + acetyl-CoA = N(6)-biotinyl-L-lysyl-[protein] + malonyl-CoA. It functions in the pathway lipid metabolism; malonyl-CoA biosynthesis; malonyl-CoA from acetyl-CoA: step 1/1. Its function is as follows. Component of the acetyl coenzyme A carboxylase (ACC) complex. Biotin carboxylase (BC) catalyzes the carboxylation of biotin on its carrier protein (BCCP) and then the CO(2) group is transferred by the transcarboxylase to acetyl-CoA to form malonyl-CoA. In Bacillus licheniformis (strain ATCC 14580 / DSM 13 / JCM 2505 / CCUG 7422 / NBRC 12200 / NCIMB 9375 / NCTC 10341 / NRRL NRS-1264 / Gibson 46), this protein is Acetyl-coenzyme A carboxylase carboxyl transferase subunit beta.